A 432-amino-acid chain; its full sequence is Enolase (432 aa).

A (2R)-2-phosphoglycerate-binding site is contributed by Gln163. The active-site Proton donor is the Glu205. Positions 242, 285, and 312 each coordinate Mg(2+). (2R)-2-phosphoglycerate contacts are provided by Lys337, Arg366, Ser367, and Lys388. The active-site Proton acceptor is Lys337.

The protein belongs to the enolase family. Requires Mg(2+) as cofactor.

The protein resides in the cytoplasm. It localises to the secreted. It is found in the cell surface. It carries out the reaction (2R)-2-phosphoglycerate = phosphoenolpyruvate + H2O. The protein operates within carbohydrate degradation; glycolysis; pyruvate from D-glyceraldehyde 3-phosphate: step 4/5. Its function is as follows. Catalyzes the reversible conversion of 2-phosphoglycerate (2-PG) into phosphoenolpyruvate (PEP). It is essential for the degradation of carbohydrates via glycolysis. The polypeptide is Enolase (Desulfovibrio desulfuricans (strain ATCC 27774 / DSM 6949 / MB)).